Consider the following 383-residue polypeptide: S-adenosylmethionine synthase (383 aa).

Position 15 (H15) interacts with ATP. D17 provides a ligand contact to Mg(2+). E43 is a binding site for K(+). Residues E56 and Q99 each coordinate L-methionine. Positions Q99–R109 are flexible loop. ATP-binding positions include D164 to K166, R230 to F231, D239, R245 to K246, A262, and K266. D239 lines the L-methionine pocket. K270 is a binding site for L-methionine.

The protein belongs to the AdoMet synthase family. As to quaternary structure, homotetramer; dimer of dimers. Mg(2+) is required as a cofactor. The cofactor is K(+).

It is found in the cytoplasm. The catalysed reaction is L-methionine + ATP + H2O = S-adenosyl-L-methionine + phosphate + diphosphate. It participates in amino-acid biosynthesis; S-adenosyl-L-methionine biosynthesis; S-adenosyl-L-methionine from L-methionine: step 1/1. Catalyzes the formation of S-adenosylmethionine (AdoMet) from methionine and ATP. The overall synthetic reaction is composed of two sequential steps, AdoMet formation and the subsequent tripolyphosphate hydrolysis which occurs prior to release of AdoMet from the enzyme. The sequence is that of S-adenosylmethionine synthase from Shewanella sp. (strain ANA-3).